The sequence spans 137 residues: Oleosin Ara h 11.0102 (137 aa).

At alanine 2 the chain carries N-acetylalanine; alternate. 2 helical membrane passes run 27–47 (AVVA…ATVI) and 55–75 (LFVI…LLGL).

The protein belongs to the oleosin family. Expressed in seeds (at protein level).

Its subcellular location is the lipid droplet. The protein localises to the membrane. May have a structural role to stabilize the lipid body during desiccation of the seed by preventing coalescence of the oil. Probably interacts with both lipid and phospholipid moieties of lipid bodies. May also provide recognition signals for specific lipase anchorage in lipolysis during seedling growth. This chain is Oleosin Ara h 11.0102, found in Arachis hypogaea (Peanut).